The following is a 938-amino-acid chain: Bifunctional glutamine synthetase adenylyltransferase/adenylyl-removing enzyme (938 aa).

Residues 1 to 457 (MLEADAARLK…HFDHVFGDPS (457 aa)) form an adenylyl removase region. An adenylyl transferase region spans residues 460 to 938 (AHTLDSMWAA…ALWTIVFGSA (479 aa)).

This sequence belongs to the GlnE family. Mg(2+) is required as a cofactor.

It carries out the reaction [glutamine synthetase]-O(4)-(5'-adenylyl)-L-tyrosine + phosphate = [glutamine synthetase]-L-tyrosine + ADP. The catalysed reaction is [glutamine synthetase]-L-tyrosine + ATP = [glutamine synthetase]-O(4)-(5'-adenylyl)-L-tyrosine + diphosphate. Its function is as follows. Involved in the regulation of glutamine synthetase GlnA, a key enzyme in the process to assimilate ammonia. When cellular nitrogen levels are high, the C-terminal adenylyl transferase (AT) inactivates GlnA by covalent transfer of an adenylyl group from ATP to specific tyrosine residue of GlnA, thus reducing its activity. Conversely, when nitrogen levels are low, the N-terminal adenylyl removase (AR) activates GlnA by removing the adenylyl group by phosphorolysis, increasing its activity. The regulatory region of GlnE binds the signal transduction protein PII (GlnB) which indicates the nitrogen status of the cell. The protein is Bifunctional glutamine synthetase adenylyltransferase/adenylyl-removing enzyme of Aromatoleum aromaticum (strain DSM 19018 / LMG 30748 / EbN1) (Azoarcus sp. (strain EbN1)).